The following is a 267-amino-acid chain: 4-diphosphocytidyl-2-C-methyl-D-erythritol kinase (267 aa).

Lys8 is an active-site residue. 90–100 serves as a coordination point for ATP; it reads PIGAGLGGGSS. Asp132 is an active-site residue.

It belongs to the GHMP kinase family. IspE subfamily.

It carries out the reaction 4-CDP-2-C-methyl-D-erythritol + ATP = 4-CDP-2-C-methyl-D-erythritol 2-phosphate + ADP + H(+). Its pathway is isoprenoid biosynthesis; isopentenyl diphosphate biosynthesis via DXP pathway; isopentenyl diphosphate from 1-deoxy-D-xylulose 5-phosphate: step 3/6. Catalyzes the phosphorylation of the position 2 hydroxy group of 4-diphosphocytidyl-2C-methyl-D-erythritol. This chain is 4-diphosphocytidyl-2-C-methyl-D-erythritol kinase, found in Azobacteroides pseudotrichonymphae genomovar. CFP2.